A 583-amino-acid polypeptide reads, in one-letter code: Secretogranin-2b (583 aa).

An N-terminal signal peptide occupies residues Met-1–Gly-28. 2 disordered regions span residues Ala-123–Val-159 and Val-526–Met-583. The span at Ala-534–Gly-546 shows a compositional bias: basic and acidic residues.

It belongs to the chromogranin/secretogranin protein family.

It localises to the secreted. Functionally, neuroendocrine protein of the granin family that regulates the biogenesis of secretory granules. Required for neurovascular modeling of the hindbrain. Acts in a non-cell autonomous manner and is required for migration and proliferation of central artery endothelial cells. Required for normal courting behavior and spawning. This chain is Secretogranin-2b, found in Danio rerio (Zebrafish).